Reading from the N-terminus, the 251-residue chain is BRI3-binding protein (251 aa).

4 consecutive transmembrane segments (helical) span residues 13–33, 125–145, 146–166, and 185–205; these read AGLL…PGAQ, ALLL…TLGF, TFSV…VVLF, and VLPL…GFYW. The stretch at 217 to 247 forms a coiled coil; that stretch reads NPSVEEKLEHLEKQVRLLNIRLNRVLESLDR. Residue K229 is modified to N6-acetyllysine. Phosphoserine is present on S248.

Interacts with LETMD1. Interacts with BRI3 (isoforms 1 and 2); the interaction with isoform 2 is weaker than with isoform 1. Interacts with BRI3; the interaction is weak. Interacts with TMEM238L. As to expression, most abundantly expressed in brain, liver and kidney. Overexpressed in leukemia and lymphoma cell lines, as well as in various carcinomas.

It is found in the mitochondrion outer membrane. In terms of biological role, involved in tumorigenesis and may function by stabilizing p53/TP53. The polypeptide is BRI3-binding protein (Homo sapiens (Human)).